A 217-amino-acid chain; its full sequence is Ribose-5-phosphate isomerase A (217 aa).

Residues 28–31, 81–84, and 94–97 each bind substrate; these read TGST, DGAD, and KGGG. Residue glutamate 103 is the Proton acceptor of the active site. Substrate is bound at residue lysine 121.

The protein belongs to the ribose 5-phosphate isomerase family. In terms of assembly, homodimer.

The catalysed reaction is aldehydo-D-ribose 5-phosphate = D-ribulose 5-phosphate. Its pathway is carbohydrate degradation; pentose phosphate pathway; D-ribose 5-phosphate from D-ribulose 5-phosphate (non-oxidative stage): step 1/1. Its function is as follows. Catalyzes the reversible conversion of ribose-5-phosphate to ribulose 5-phosphate. The protein is Ribose-5-phosphate isomerase A of Aeromonas hydrophila subsp. hydrophila (strain ATCC 7966 / DSM 30187 / BCRC 13018 / CCUG 14551 / JCM 1027 / KCTC 2358 / NCIMB 9240 / NCTC 8049).